The chain runs to 188 residues: MIRFEIHGDNLTITDAIRNYIEDKVGKLERYFTNVPNVNAHVKVKTYANSSTKIEVTIPLNDVTLRAEERNDDLYAGIDLITNKLERQVRKYKTRVNRKKRKESEHEPFPATPETPPETAVDHDKDDEIEIIRSKQFSLKPMDSEEAVLQMDLLGHDFFIFNDRETDGTSIVYRRKDGKYGLIETVEN.

Residues 93–125 (KTRVNRKKRKESEHEPFPATPETPPETAVDHDK) form a disordered region.

This sequence belongs to the HPF/YfiA ribosome-associated protein family. Long HPF subfamily. As to quaternary structure, interacts with 100S ribosomes.

It is found in the cytoplasm. In terms of biological role, required for dimerization of active 70S ribosomes into 100S ribosomes in stationary phase; 100S ribosomes are translationally inactive and sometimes present during exponential growth. This is Ribosome hibernation promotion factor from Staphylococcus carnosus (strain TM300).